The primary structure comprises 374 residues: Fanconi anemia group F protein (374 aa).

As to quaternary structure, belongs to the multisubunit FA complex composed of FANCA, FANCB, FANCC, FANCE, FANCF, FANCG, FANCL/PHF9 and FANCM. The complex is not found in FA patients. In complex with FANCA, FANCG and FANCL, but not with FANCC, nor FANCE, interacts with HES1; this interaction may be essential for the stability and nuclear localization of FA core complex proteins.

The protein resides in the nucleus. Functionally, DNA repair protein that may operate in a postreplication repair or a cell cycle checkpoint function. May be implicated in interstrand DNA cross-link repair and in the maintenance of normal chromosome stability. This Homo sapiens (Human) protein is Fanconi anemia group F protein (FANCF).